Consider the following 483-residue polypeptide: Phosphomethylpyrimidine synthase (483 aa).

Residues Asn97, Met126, Tyr156, His192, 212–214, 253–256, and Glu292 contribute to the substrate site; these read SRG and DSLR. A Zn(2+)-binding site is contributed by His296. Tyr319 is a binding site for substrate. His360 provides a ligand contact to Zn(2+). [4Fe-4S] cluster-binding residues include Cys440, Cys443, and Cys448.

This sequence belongs to the ThiC family. The cofactor is [4Fe-4S] cluster.

It catalyses the reaction 5-amino-1-(5-phospho-beta-D-ribosyl)imidazole + S-adenosyl-L-methionine = 4-amino-2-methyl-5-(phosphooxymethyl)pyrimidine + CO + 5'-deoxyadenosine + formate + L-methionine + 3 H(+). Its pathway is cofactor biosynthesis; thiamine diphosphate biosynthesis. Its function is as follows. Catalyzes the synthesis of the hydroxymethylpyrimidine phosphate (HMP-P) moiety of thiamine from aminoimidazole ribotide (AIR) in a radical S-adenosyl-L-methionine (SAM)-dependent reaction. This chain is Phosphomethylpyrimidine synthase, found in Parasynechococcus marenigrum (strain WH8102).